The chain runs to 84 residues: M-zodatoxin-Lt2b (84 aa).

An N-terminal signal peptide occupies residues 1–22 (MKYFVIALALAVALVCIAESTA). The propeptide occupies 23-58 (YEVNEELENELDDLDDAAWLAVAEELQGLEDFEESR). Residues 55 to 58 (EESR) carry the Processing quadruplet motif motif.

In terms of processing, cleavage of the propeptide depends on the processing quadruplet motif (XXXR, with at least one of X being E). Expressed by the venom gland.

It localises to the secreted. Has antimicrobial activity against both Gram-positive and Gram-negative bacteria, and yeasts. Also has a strong hemolytic activity against rabbit erythrocytes. Causes paralysis, but is not lethal when injected into insect (M.domestica) larvae. The sequence is that of M-zodatoxin-Lt2b from Lachesana tarabaevi (Spider).